We begin with the raw amino-acid sequence, 378 residues long: Alanine dehydrogenase (378 aa).

Positions 15 and 74 each coordinate substrate. His95 (proton donor/acceptor) is an active-site residue. NAD(+) contacts are provided by residues Ser132, Val176–Val177, Asp196, Ser218, Val237–Leu238, Val265–Asp268, and Val297–Met300. Asp268 (proton donor/acceptor) is an active-site residue.

It belongs to the AlaDH/PNT family. Homohexamer. Trimer of dimer.

Its subcellular location is the cytoplasm. The enzyme catalyses L-alanine + NAD(+) + H2O = pyruvate + NH4(+) + NADH + H(+). It participates in amino-acid degradation; L-alanine degradation via dehydrogenase pathway; NH(3) and pyruvate from L-alanine: step 1/1. Catalyzes the reversible oxidative deamination of L-alanine to pyruvate. Oxidative deamination proceeds through a sequential, ordered ternary-binary mechanism, where NAD(+) binds first followed by L-alanine; the products are released in the order ammonia, pyruvate and NADH. Disruption blocks sporulation probably in stage V; 20-30% sporulation can be restored if the media is supplemented with pyruvate, suggesting lack of pyruvate blocks sporulation. Thus it is a key factor in the assimilation of L-alanine as an energy source via the tricarboxylic acid cycle during sporulation. The chain is Alanine dehydrogenase from Bacillus subtilis (strain 168).